A 311-amino-acid chain; its full sequence is Methionyl-tRNA formyltransferase (311 aa).

The disordered stretch occupies residues 33–52 (RPDRPAGRGRHQRSSPVREL). Residue 110–113 (SLLP) participates in (6S)-5,6,7,8-tetrahydrofolate binding.

This sequence belongs to the Fmt family.

The enzyme catalyses L-methionyl-tRNA(fMet) + (6R)-10-formyltetrahydrofolate = N-formyl-L-methionyl-tRNA(fMet) + (6S)-5,6,7,8-tetrahydrofolate + H(+). Functionally, attaches a formyl group to the free amino group of methionyl-tRNA(fMet). The formyl group appears to play a dual role in the initiator identity of N-formylmethionyl-tRNA by promoting its recognition by IF2 and preventing the misappropriation of this tRNA by the elongation apparatus. This chain is Methionyl-tRNA formyltransferase, found in Parafrankia sp. (strain EAN1pec).